The chain runs to 143 residues: UPF0292 protein Mbar_A0484 (143 aa).

Positions 28–109 constitute a Toprim domain; that stretch reads GAIIIVEGKR…KPELEIRNKL (82 aa). 3 residues coordinate Mg(2+): glutamate 34, aspartate 78, and aspartate 80.

This sequence belongs to the UPF0292 family. It depends on Mg(2+) as a cofactor.

This is UPF0292 protein Mbar_A0484 from Methanosarcina barkeri (strain Fusaro / DSM 804).